Here is a 438-residue protein sequence, read N- to C-terminus: tRNA wybutosine-synthesizing protein 2 homolog (438 aa).

Residues S209, K216, E256, and 284 to 285 each bind S-adenosyl-L-methionine; that span reads DN.

This sequence belongs to the class I-like SAM-binding methyltransferase superfamily. TRM5/TYW2 family.

It catalyses the reaction 4-demethylwyosine(37) in tRNA(Phe) + S-adenosyl-L-methionine = 4-demethyl-7-[(3S)-3-amino-3-carboxypropyl]wyosine(37) in tRNA(Phe) + S-methyl-5'-thioadenosine + H(+). It functions in the pathway tRNA modification; wybutosine-tRNA(Phe) biosynthesis. In terms of biological role, S-adenosyl-L-methionine-dependent transferase that acts as a component of the wybutosine biosynthesis pathway. Wybutosine is a hyper modified guanosine with a tricyclic base found at the 3'-position adjacent to the anticodon of eukaryotic phenylalanine tRNA. Catalyzes the transfer of the alpha-amino-alpha-carboxypropyl (acp) group from S-adenosyl-L-methionine to the C-7 position of 4-demethylwyosine (imG-14) to produce wybutosine-86. In Bos taurus (Bovine), this protein is tRNA wybutosine-synthesizing protein 2 homolog (TRMT12).